The following is a 635-amino-acid chain: Biosynthetic arginine decarboxylase (635 aa).

K100 is modified (N6-(pyridoxal phosphate)lysine). 282–292 lines the substrate pocket; the sequence is VDIGGGLGVDY.

The protein belongs to the Orn/Lys/Arg decarboxylase class-II family. SpeA subfamily. Requires Mg(2+) as cofactor. The cofactor is pyridoxal 5'-phosphate.

It carries out the reaction L-arginine + H(+) = agmatine + CO2. Its pathway is amine and polyamine biosynthesis; agmatine biosynthesis; agmatine from L-arginine: step 1/1. Its function is as follows. Catalyzes the biosynthesis of agmatine from arginine. The protein is Biosynthetic arginine decarboxylase of Geotalea daltonii (strain DSM 22248 / JCM 15807 / FRC-32) (Geobacter daltonii).